The primary structure comprises 128 residues: Fluoride-specific ion channel FluC (128 aa).

4 helical membrane-spanning segments follow: residues 1 to 21 (MPERYAALLLVGAGGFVGATA), 45 to 65 (LAGCFLIGFISQLSVSSSLVS), 70 to 90 (LLLATGFCGGFTTFSSYMYEI), and 99 to 119 (IFYSTLYLLGSIVGGILCLYF). Na(+)-binding residues include Gly-78 and Thr-81.

It belongs to the fluoride channel Fluc/FEX (TC 1.A.43) family.

The protein resides in the cell inner membrane. The catalysed reaction is fluoride(in) = fluoride(out). Na(+) is not transported, but it plays an essential structural role and its presence is essential for fluoride channel function. In terms of biological role, fluoride-specific ion channel. Important for reducing fluoride concentration in the cell, thus reducing its toxicity. The protein is Fluoride-specific ion channel FluC of Chlorobium phaeobacteroides (strain BS1).